A 397-amino-acid polypeptide reads, in one-letter code: Acetate kinase (397 aa).

Asn-7 lines the Mg(2+) pocket. Lys-14 lines the ATP pocket. Arg-88 is a binding site for substrate. The active-site Proton donor/acceptor is the Asp-145. ATP-binding positions include His-205–Gly-209, Asp-279–Arg-281, and Gly-326–Asn-330. Glu-380 is a Mg(2+) binding site.

Belongs to the acetokinase family. In terms of assembly, homodimer. It depends on Mg(2+) as a cofactor. Requires Mn(2+) as cofactor.

The protein resides in the cytoplasm. It carries out the reaction acetate + ATP = acetyl phosphate + ADP. It functions in the pathway metabolic intermediate biosynthesis; acetyl-CoA biosynthesis; acetyl-CoA from acetate: step 1/2. Functionally, catalyzes the formation of acetyl phosphate from acetate and ATP. Can also catalyze the reverse reaction. This is Acetate kinase from Campylobacter concisus (strain 13826).